We begin with the raw amino-acid sequence, 506 residues long: Cobyric acid synthase (506 aa).

One can recognise a GATase cobBQ-type domain in the interval 260–453; the sequence is KVGVAAIYFP…FHGIFNEPAV (194 aa). Cys341 functions as the Nucleophile in the catalytic mechanism. Residue His445 is part of the active site.

This sequence belongs to the CobB/CobQ family. CobQ subfamily.

It participates in cofactor biosynthesis; adenosylcobalamin biosynthesis. Its function is as follows. Catalyzes amidations at positions B, D, E, and G on adenosylcobyrinic A,C-diamide. NH(2) groups are provided by glutamine, and one molecule of ATP is hydrogenolyzed for each amidation. The protein is Cobyric acid synthase of Chlorobium chlorochromatii (strain CaD3).